Here is a 377-residue protein sequence, read N- to C-terminus: Uroporphyrinogen decarboxylase (377 aa).

Residues 40–44, Asp89, Tyr169, Ser224, and His354 contribute to the substrate site; that span reads RQAGR.

It belongs to the uroporphyrinogen decarboxylase family. In terms of assembly, homodimer.

It is found in the cytoplasm. It carries out the reaction uroporphyrinogen III + 4 H(+) = coproporphyrinogen III + 4 CO2. Its pathway is porphyrin-containing compound metabolism; protoporphyrin-IX biosynthesis; coproporphyrinogen-III from 5-aminolevulinate: step 4/4. Catalyzes the decarboxylation of four acetate groups of uroporphyrinogen-III to yield coproporphyrinogen-III. The polypeptide is Uroporphyrinogen decarboxylase (Leifsonia xyli subsp. xyli (strain CTCB07)).